The following is a 683-amino-acid chain: MHSLFKQLVFFLVMTLTAADKAAFDAESMLEAPRRSAVVSNPLGNLGIFIESNYSFADHKYNSGIYLLNESTRNHQELLVHGKSNKALTWITDSAFLYAREDNSSSSSILLFDVNNRSERIIYNHNSSISDIRIGEKNNHYRIVFSSVDNSLVKGPSNVHVYDHLFVRHWDRWNTGSRNTLYFIELDKKTENSNYFEISSEKAIDLLKETGLESPVEPFGGLSDFDSNYDKLVFVAKDPKLNPATQTKTVVYEINLNTRNLKSLSTAKGACSSPRLAKDGNHIAWLEMQTPQYESDQNQIMVYESESGAKKHIARHWDRSPSSIEWGVFKGGEPGLFAIAENYGKQILFFVSIFHHQVIPMTEEHSVSSISVPKSSSLWLTKSSLINPPYYAKINVETLNESVLLENNVGLSPTSYEEIWFPGTHGHRIHAWIVKPESFDKSKKYPVAVLIHGGPQGSWTDSWSTRWNPAVFANAGFIVFALDPTGSTGYGQRFTDSIALDWGGKPYKDIELGVEYIKNHLSYADSEKMVALGASYGGYMINWIQGHPLGRQFRALVCHDGVFNTLNTFYNTEELYFSIHDFGGTPWENRVIYERWNPSNFVNYWATPELVIHSSKDYRLTESEGIAAFNVLQYKGIPSRLLVFEDENHWVIKPDNSLRWHKEVLSWILHYTKDCNANEDETF.

A signal peptide spans 1 to 19 (MHSLFKQLVFFLVMTLTAA). N-linked (GlcNAc...) asparagine glycosylation is found at Asn53, Asn69, Asn103, Asn116, Asn126, and Asn400. Residues Ser535, Asp617, and His649 each act as charge relay system in the active site.

This sequence belongs to the peptidase S9C family.

The protein localises to the secreted. The protein resides in the cytoplasm. Its subcellular location is the nucleus. The chain is Dipeptidyl-peptidase 5 from Schizosaccharomyces pombe (strain 972 / ATCC 24843) (Fission yeast).